The following is a 200-amino-acid chain: ATP-dependent Clp protease proteolytic subunit 3 (200 aa).

The active-site Nucleophile is S101. The active site involves H126.

It belongs to the peptidase S14 family. In terms of assembly, fourteen ClpP subunits assemble into 2 heptameric rings which stack back to back to give a disk-like structure with a central cavity, resembling the structure of eukaryotic proteasomes.

Its subcellular location is the cytoplasm. The enzyme catalyses Hydrolysis of proteins to small peptides in the presence of ATP and magnesium. alpha-casein is the usual test substrate. In the absence of ATP, only oligopeptides shorter than five residues are hydrolyzed (such as succinyl-Leu-Tyr-|-NHMec, and Leu-Tyr-Leu-|-Tyr-Trp, in which cleavage of the -Tyr-|-Leu- and -Tyr-|-Trp bonds also occurs).. Its function is as follows. Cleaves peptides in various proteins in a process that requires ATP hydrolysis. Has a chymotrypsin-like activity. Plays a major role in the degradation of misfolded proteins. The polypeptide is ATP-dependent Clp protease proteolytic subunit 3 (Synechococcus sp. (strain CC9605)).